Consider the following 170-residue polypeptide: Small ribosomal subunit protein uS9 (170 aa).

It belongs to the universal ribosomal protein uS9 family.

The chain is Small ribosomal subunit protein uS9 from Rhodococcus opacus (strain B4).